The sequence spans 251 residues: Ubiquinone/menaquinone biosynthesis C-methyltransferase UbiE (251 aa).

Residues T74, D95, 123-124 (NA), and S140 contribute to the S-adenosyl-L-methionine site.

The protein belongs to the class I-like SAM-binding methyltransferase superfamily. MenG/UbiE family.

The catalysed reaction is a 2-demethylmenaquinol + S-adenosyl-L-methionine = a menaquinol + S-adenosyl-L-homocysteine + H(+). It carries out the reaction a 2-methoxy-6-(all-trans-polyprenyl)benzene-1,4-diol + S-adenosyl-L-methionine = a 5-methoxy-2-methyl-3-(all-trans-polyprenyl)benzene-1,4-diol + S-adenosyl-L-homocysteine + H(+). It participates in quinol/quinone metabolism; menaquinone biosynthesis; menaquinol from 1,4-dihydroxy-2-naphthoate: step 2/2. Its pathway is cofactor biosynthesis; ubiquinone biosynthesis. Its function is as follows. Methyltransferase required for the conversion of demethylmenaquinol (DMKH2) to menaquinol (MKH2) and the conversion of 2-polyprenyl-6-methoxy-1,4-benzoquinol (DDMQH2) to 2-polyprenyl-3-methyl-6-methoxy-1,4-benzoquinol (DMQH2). This Salmonella arizonae (strain ATCC BAA-731 / CDC346-86 / RSK2980) protein is Ubiquinone/menaquinone biosynthesis C-methyltransferase UbiE.